Consider the following 372-residue polypeptide: 3-dehydroquinate synthase (372 aa).

Residues G116 to D120, T140 to T141, K153, K162, and T180 to T183 each bind NAD(+). 3 residues coordinate Zn(2+): E195, H260, and H277.

Belongs to the sugar phosphate cyclases superfamily. Dehydroquinate synthase family. The cofactor is Co(2+). Zn(2+) serves as cofactor. NAD(+) is required as a cofactor.

It is found in the cytoplasm. It carries out the reaction 7-phospho-2-dehydro-3-deoxy-D-arabino-heptonate = 3-dehydroquinate + phosphate. The protein operates within metabolic intermediate biosynthesis; chorismate biosynthesis; chorismate from D-erythrose 4-phosphate and phosphoenolpyruvate: step 2/7. Its function is as follows. Catalyzes the conversion of 3-deoxy-D-arabino-heptulosonate 7-phosphate (DAHP) to dehydroquinate (DHQ). The chain is 3-dehydroquinate synthase from Prochlorococcus marinus (strain MIT 9303).